A 327-amino-acid polypeptide reads, in one-letter code: Porphobilinogen deaminase (327 aa).

Residue Cys251 is modified to S-(dipyrrolylmethanemethyl)cysteine.

Belongs to the HMBS family. Dipyrromethane serves as cofactor.

It carries out the reaction 4 porphobilinogen + H2O = hydroxymethylbilane + 4 NH4(+). It participates in porphyrin-containing compound metabolism; protoporphyrin-IX biosynthesis; coproporphyrinogen-III from 5-aminolevulinate: step 2/4. In terms of biological role, catalyzes the tetrapolymerization of the monopyrrole porphobilinogen (PBG) into the hydroxymethylbilane pre-uroporphyrinogen in several discrete steps. In Saccharomyces cerevisiae (strain ATCC 204508 / S288c) (Baker's yeast), this protein is Porphobilinogen deaminase (HEM3).